Here is a 987-residue protein sequence, read N- to C-terminus: Mediator of RNA polymerase II transcription subunit 24 (987 aa).

Short sequence motifs (LXXLL motif) lie at residues Leu-128–Leu-132, Leu-344–Leu-348, Leu-446–Leu-450, Leu-555–Leu-559, Leu-786–Leu-790, and Leu-855–Leu-859. Residues Ser-860 and Ser-871 each carry the phosphoserine modification.

Belongs to the Mediator complex subunit 24 family. As to quaternary structure, component of the Mediator complex, which is composed of MED1, MED4, MED6, MED7, MED8, MED9, MED10, MED11, MED12, MED13, MED13L, MED14, MED15, MED16, MED17, MED18, MED19, MED20, MED21, MED22, MED23, MED24, MED25, MED26, MED27, MED29, MED30, MED31, CCNC, CDK8 and CDC2L6/CDK11. The MED12, MED13, CCNC and CDK8 subunits form a distinct module termed the CDK8 module. Mediator containing the CDK8 module is less active than Mediator lacking this module in supporting transcriptional activation. Individual preparations of the Mediator complex lacking one or more distinct subunits have been variously termed ARC, CRSP, DRIP, PC2, SMCC and TRAP. Interacts with AR.

Its subcellular location is the nucleus. Its function is as follows. Component of the Mediator complex, a coactivator involved in the regulated transcription of nearly all RNA polymerase II-dependent genes. Mediator functions as a bridge to convey information from gene-specific regulatory proteins to the basal RNA polymerase II transcription machinery. Mediator is recruited to promoters by direct interactions with regulatory proteins and serves as a scaffold for the assembly of a functional preinitiation complex with RNA polymerase II and the general transcription factors. In Rattus norvegicus (Rat), this protein is Mediator of RNA polymerase II transcription subunit 24 (Med24).